A 177-amino-acid chain; its full sequence is Endoribonuclease YbeY (177 aa).

Residues His114, His118, and His124 each contribute to the Zn(2+) site. The segment at 154 to 177 (SYPEAIPTNPAPRRQASSSAGHIE) is disordered. Positions 168-177 (QASSSAGHIE) are enriched in polar residues.

It belongs to the endoribonuclease YbeY family. It depends on Zn(2+) as a cofactor.

It is found in the cytoplasm. Its function is as follows. Single strand-specific metallo-endoribonuclease involved in late-stage 70S ribosome quality control and in maturation of the 3' terminus of the 16S rRNA. The sequence is that of Endoribonuclease YbeY from Cellvibrio japonicus (strain Ueda107) (Pseudomonas fluorescens subsp. cellulosa).